The following is a 505-amino-acid chain: Cyclin-dependent kinase C-1 (505 aa).

Residues 26-325 (FEKLEQIGEG…AKDALDAEYF (300 aa)) enclose the Protein kinase domain. ATP-binding positions include 32 to 40 (IGEGTYGQV) and lysine 55. The residue at position 37 (tyrosine 37) is a Phosphotyrosine. Residue aspartate 164 is the Proton acceptor of the active site. Threonine 198 is subject to Phosphothreonine. The segment at 336–505 (SLPTYESSHE…QRNQQYGWQQ (170 aa)) is disordered. Residues 429–456 (PPSGNQSGGYNQSRGGYSSGSYPPQGRG) show a composition bias toward low complexity. Residues 482–491 (GQYGGSGSSG) show a composition bias toward gly residues. Positions 492 to 505 (RGQNQRNQQYGWQQ) are enriched in low complexity.

It belongs to the protein kinase superfamily. CMGC Ser/Thr protein kinase family. CDC2/CDKX subfamily. In terms of assembly, interacts with CYCT1-3. In terms of tissue distribution, highly expressed in flowers. Expressed in seedlings, roots, rosettes and stems.

The enzyme catalyses L-seryl-[protein] + ATP = O-phospho-L-seryl-[protein] + ADP + H(+). The catalysed reaction is L-threonyl-[protein] + ATP = O-phospho-L-threonyl-[protein] + ADP + H(+). It carries out the reaction [DNA-directed RNA polymerase] + ATP = phospho-[DNA-directed RNA polymerase] + ADP + H(+). This Arabidopsis thaliana (Mouse-ear cress) protein is Cyclin-dependent kinase C-1 (CDKC-1).